Reading from the N-terminus, the 482-residue chain is Serine carboxypeptidase-like 26 (482 aa).

The first 28 residues, 1–28, serve as a signal peptide directing secretion; sequence MAVAAAAAARRRDVSCLLLLLCFSSSMA. Disulfide bonds link Cys101–Cys366, Cys263–Cys274, and Cys298–Cys333. N-linked (GlcNAc...) asparagine glycosylation occurs at Asn152. Residue Ser194 is part of the active site. N-linked (GlcNAc...) asparagine glycans are attached at residues Asn269, Asn301, Asn354, and Asn375. Catalysis depends on residues Asp403 and His455.

The protein belongs to the peptidase S10 family.

The protein localises to the secreted. In terms of biological role, acts as a positive regulator of grain size by controlling grain width, filling and weight. High expression of GS5 in the grain is correlated with large grain size. This Oryza sativa subsp. japonica (Rice) protein is Serine carboxypeptidase-like 26.